Consider the following 243-residue polypeptide: DNA repair protein RecO (243 aa).

It belongs to the RecO family.

Functionally, involved in DNA repair and RecF pathway recombination. The polypeptide is DNA repair protein RecO (Thermobifida fusca (strain YX)).